Reading from the N-terminus, the 330-residue chain is Deoxyhypusine hydroxylase (330 aa).

HEAT-like PBS-type repeat units follow at residues 57-83 (LKHELAYCLGQIRNPLALPVLESVLRN), 90-116 (VRHEAAEAMGAISTADSIPILKQYLSD), and 199-225 (ERYRAMFALRNIGSPAAVDALAAGFSG). The Fe cation site is built by His-59, Glu-60, His-92, and Glu-93. Fe cation-binding residues include His-232, Glu-233, His-265, and Glu-266. Residues 263 to 289 (VRHEAAEALGGIATPEVLPPLKEWVAR) form an HEAT-like PBS-type 4 repeat.

The protein belongs to the deoxyhypusine hydroxylase family. The cofactor is Fe(2+).

It localises to the cytoplasm. The protein localises to the nucleus. It carries out the reaction [eIF5A protein]-deoxyhypusine + AH2 + O2 = [eIF5A protein]-hypusine + A + H2O. It functions in the pathway protein modification; eIF5A hypusination. In terms of biological role, catalyzes the hydroxylation of the N(6)-(4-aminobutyl)-L-lysine intermediate to form hypusine, an essential post-translational modification only found in mature eIF-5A factor. The sequence is that of Deoxyhypusine hydroxylase from Lentinula edodes (Shiitake mushroom).